Consider the following 361-residue polypeptide: MTQTPPPAPGPSGVRQAVRDIPAYPFTPIDVPYKLDQNENPYDFPPELKQKAAERMLAHPWNRYPDLHADTLRAAIAGYEGWDAAGVVITPGSNVLIKILTELGGIGQTVLTTDPTFSVYTLEAAMLGAELVLTPLNPDFSLPVEATLQALAAHAPGVFYVTQPHAPTGHSDRPEDVRRVVEVADRLGWVTVIDEAYSQYAGTDYRELVRAGKHVLSLRTFSKAWGLAGVRAGYLLTNPELAGHLQKLVSAFTINFLTQAVIETALEHPEYMRERVAEAIAERGRIYAAVQGHPTCTIFPSNTNFFLLKTPDADAAYRHLLEHGIVCRRQDKLRGLDGCLRIAVGTPAENDALIAAILALR.

Lysine 223 is subject to N6-(pyridoxal phosphate)lysine.

It belongs to the class-II pyridoxal-phosphate-dependent aminotransferase family. Histidinol-phosphate aminotransferase subfamily. Homodimer. It depends on pyridoxal 5'-phosphate as a cofactor.

The enzyme catalyses L-histidinol phosphate + 2-oxoglutarate = 3-(imidazol-4-yl)-2-oxopropyl phosphate + L-glutamate. It functions in the pathway amino-acid biosynthesis; L-histidine biosynthesis; L-histidine from 5-phospho-alpha-D-ribose 1-diphosphate: step 7/9. In Deinococcus radiodurans (strain ATCC 13939 / DSM 20539 / JCM 16871 / CCUG 27074 / LMG 4051 / NBRC 15346 / NCIMB 9279 / VKM B-1422 / R1), this protein is Histidinol-phosphate aminotransferase.